The primary structure comprises 147 residues: Large ribosomal subunit protein uL16 (147 aa).

It belongs to the universal ribosomal protein uL16 family. Part of the 50S ribosomal subunit.

Functionally, binds 23S rRNA and is also seen to make contacts with the A and possibly P site tRNAs. The protein is Large ribosomal subunit protein uL16 of Clostridium botulinum (strain ATCC 19397 / Type A).